The following is a 230-amino-acid chain: Large ribosomal subunit protein uL1 (230 aa).

The protein belongs to the universal ribosomal protein uL1 family. In terms of assembly, part of the 50S ribosomal subunit.

In terms of biological role, binds directly to 23S rRNA. The L1 stalk is quite mobile in the ribosome, and is involved in E site tRNA release. Protein L1 is also a translational repressor protein, it controls the translation of the L11 operon by binding to its mRNA. The polypeptide is Large ribosomal subunit protein uL1 (Sulfurimonas denitrificans (strain ATCC 33889 / DSM 1251) (Thiomicrospira denitrificans (strain ATCC 33889 / DSM 1251))).